The chain runs to 305 residues: 2-oxoacid:ferredoxin oxidoreductase subunit beta (305 aa).

Cys-12, Cys-15, and Cys-46 together coordinate [4Fe-4S] cluster. Residues Ile-44–Ser-47 and His-65 contribute to the thiamine diphosphate site. Asp-90 provides a ligand contact to Mg(2+). A thiamine diphosphate-binding site is contributed by Gly-91–Asp-92. Mg(2+)-binding residues include Asn-118 and Val-120. Residue Gly-122–Leu-123 participates in thiamine diphosphate binding. Cys-197 contributes to the [4Fe-4S] cluster binding site.

Heterodimer composed of an alpha and a beta subunit. [4Fe-4S] cluster serves as cofactor. The cofactor is thiamine diphosphate. Mg(2+) is required as a cofactor.

It localises to the cytoplasm. The catalysed reaction is a 2-oxocarboxylate + 2 oxidized [2Fe-2S]-[ferredoxin] + CoA = an acyl-CoA + 2 reduced [2Fe-2S]-[ferredoxin] + CO2 + H(+). Catalyzes the coenzyme A-dependent oxidative decarboxylation of different 2-oxoacids such as 2-oxoglutarate, pyruvate and 2-oxobutyrate to form their CoA derivatives. The chain is 2-oxoacid:ferredoxin oxidoreductase subunit beta from Sulfolobus sp.